The chain runs to 634 residues: RING finger protein 207 (634 aa).

The RING-type zinc finger occupies 25–64; that stretch reads CPLCHVQYERPCLLDCFHDFCAGCLRGRATDGRLTCPLCQ. A B box-type; atypical zinc finger spans residues 93–145; the sequence is VEAVRCANCDLECSEQDVETTYFCNTCGQPLCARCRDETHRARMFARHDIVAL. Residues Cys-98, Cys-101, Cys-127, and His-132 each contribute to the Zn(2+) site. 2 coiled-coil regions span residues 422–457 and 494–518; these read EHCRHYEDSYRHLQAEMQSLKDQVQELHRDLTKHHS and EIWEEAYQRVANEQEIYEAQLHDLL. A disordered region spans residues 552–634; that stretch reads FQAPVDEQSE…DVPTWREHPT (83 aa).

In terms of assembly, interacts with the core-glycosylated, but not the fully glycosylated form of KCNH2/HERG. Interacts with DNAJA1 and HSPA8. Interacts (via the C-terminus) with HSPA1A; this interaction additively increases KCNH2 expression.

Its subcellular location is the cytoplasm. Its function is as follows. Plays a role in cardiac repolarization possibly by stabilizing membrane expression of the potassium channel KCNH2/HERG, or by assisting its synthesis, folding or export from the endoplasmic reticulum, in a heat shock protein-dependent manner. The protein is RING finger protein 207 (RNF207) of Homo sapiens (Human).